Reading from the N-terminus, the 497-residue chain is Putative glucuronosyltransferase PGSIP8 (497 aa).

A helical membrane pass occupies residues 3-23; it reads LQRGFVFLSLVLSFMIIETTA. Mn(2+) contacts are provided by Asp165 and Asp167. The next 5 helical transmembrane spans lie at 319–339, 365–385, 388–408, 418–438, and 442–462; these read YSAEMPLVIIQAMFYLGIIVV, GFKLIALLSVVAAYIFPFFTI, TIHPLIGWSLYLMASFALSSI, LPVLTPWLGILGTLLVMAFPW, and GVVRALSVFAYAFCCAPFVWV.

The protein belongs to the glycosyltransferase 8 family. Glycogenin subfamily. It depends on Mn(2+) as a cofactor.

The protein localises to the membrane. This chain is Putative glucuronosyltransferase PGSIP8 (PGSIP8), found in Arabidopsis thaliana (Mouse-ear cress).